The following is a 212-amino-acid chain: Thiamine-phosphate synthase (212 aa).

Residues 33–37 and asparagine 65 each bind 4-amino-2-methyl-5-(diphosphooxymethyl)pyrimidine; that span reads QMRFK. Mg(2+)-binding residues include aspartate 66 and aspartate 85. Threonine 104 contacts 4-amino-2-methyl-5-(diphosphooxymethyl)pyrimidine. 130-132 is a 2-[(2R,5Z)-2-carboxy-4-methylthiazol-5(2H)-ylidene]ethyl phosphate binding site; it reads TNT. Residue lysine 133 coordinates 4-amino-2-methyl-5-(diphosphooxymethyl)pyrimidine. Glycine 166 contributes to the 2-[(2R,5Z)-2-carboxy-4-methylthiazol-5(2H)-ylidene]ethyl phosphate binding site.

This sequence belongs to the thiamine-phosphate synthase family. Mg(2+) is required as a cofactor.

It catalyses the reaction 2-[(2R,5Z)-2-carboxy-4-methylthiazol-5(2H)-ylidene]ethyl phosphate + 4-amino-2-methyl-5-(diphosphooxymethyl)pyrimidine + 2 H(+) = thiamine phosphate + CO2 + diphosphate. The enzyme catalyses 2-(2-carboxy-4-methylthiazol-5-yl)ethyl phosphate + 4-amino-2-methyl-5-(diphosphooxymethyl)pyrimidine + 2 H(+) = thiamine phosphate + CO2 + diphosphate. It carries out the reaction 4-methyl-5-(2-phosphooxyethyl)-thiazole + 4-amino-2-methyl-5-(diphosphooxymethyl)pyrimidine + H(+) = thiamine phosphate + diphosphate. It functions in the pathway cofactor biosynthesis; thiamine diphosphate biosynthesis; thiamine phosphate from 4-amino-2-methyl-5-diphosphomethylpyrimidine and 4-methyl-5-(2-phosphoethyl)-thiazole: step 1/1. Functionally, condenses 4-methyl-5-(beta-hydroxyethyl)thiazole monophosphate (THZ-P) and 2-methyl-4-amino-5-hydroxymethyl pyrimidine pyrophosphate (HMP-PP) to form thiamine monophosphate (TMP). The chain is Thiamine-phosphate synthase from Flavobacterium johnsoniae (strain ATCC 17061 / DSM 2064 / JCM 8514 / BCRC 14874 / CCUG 350202 / NBRC 14942 / NCIMB 11054 / UW101) (Cytophaga johnsonae).